Reading from the N-terminus, the 446-residue chain is COBRA-like protein 1 (446 aa).

An N-terminal signal peptide occupies residues 1 to 28 (MALLLLRMGVSVALLVAFFSSLIPSSEA). N-linked (GlcNAc...) asparagine glycosylation is found at Asn-37, Asn-162, Asn-170, Asn-209, Asn-234, Asn-316, Asn-331, Asn-350, and Asn-419. A lipid anchor (GPI-anchor amidated alanine) is attached at Ala-420. Positions 421 to 446 (STRVMSSILLPFITIWTALTFLMVYA) are cleaved as a propeptide — removed in mature form.

The protein belongs to the COBRA family.

It localises to the cell membrane. Its function is as follows. Involved in determining the orientation of cell expansion, probably by playing an important role in cellulose deposition. May act by recruiting cellulose synthesizing complexes to discrete positions on the cell surface. The sequence is that of COBRA-like protein 1 (BC1L6) from Oryza sativa subsp. japonica (Rice).